The chain runs to 325 residues: 2-oxoglutarate-dependent dioxygenase tropC (325 aa).

Residues 185–287 (PSIPMRLLHY…RYSVAFFLNG (103 aa)) enclose the Fe2OG dioxygenase domain. Fe cation contacts are provided by histidine 210, aspartate 212, and histidine 269. Arginine 278 provides a ligand contact to 2-oxoglutarate.

This sequence belongs to the iron/ascorbate-dependent oxidoreductase family. Requires Fe(2+) as cofactor.

It functions in the pathway secondary metabolite biosynthesis. Its function is as follows. 2-oxoglutarate-dependent dioxygenase; part of the gene cluster that mediates the biosynthesis of the tropolone class of fungal maleic anhydrides. The pathway begins with the synthesis of 3-methylorcinaldehyde by the non-reducing polyketide synthase (PKS) tropA. 3-methylorcinaldehyde is the substrate for the FAD-dependent monooxygenase tropB to yield a dearomatized hydroxycyclohexadione. The 2-oxoglutarate-dependent dioxygenase tropC then performs the oxidative ring expansion to provide the first tropolone metabolite stipitaldehyde. Trop D converts stipitaldehyde into stipitacetal which is in turn converted to stipitalide by the short-chain dehydrogenase/reductase tropE. The next steps involve tropF, tropG, tropH, tropI and tropJ to form successive tropolone maleic anhydrides including stipitaldehydic, stipitatonic and stipitatic acids. The chain is 2-oxoglutarate-dependent dioxygenase tropC from Talaromyces stipitatus (strain ATCC 10500 / CBS 375.48 / QM 6759 / NRRL 1006) (Penicillium stipitatum).